The following is a 1129-amino-acid chain: PAN2-PAN3 deadenylation complex catalytic subunit PAN2 (1129 aa).

WD repeat units follow at residues 20 to 60, 104 to 146, 148 to 183, 186 to 226, and 280 to 319; these read PPAV…YTSY, PDFK…DTLP, DAQYTIMKRAGQYLCAATKTGGIHILDSNSLSVIKV, GHTG…FSLK, and LYDSYLAGFEMAPSGEAFALADSNSNVHLWGSPAKVHFPE. Positions 320 to 457 are linker; sequence YSNPTEFADH…DLHLDDVTRK (138 aa). The disordered stretch occupies residues 396–427; the sequence is RTKRRNQIEVTRQTDRSSDSLTPPKFLSEKSR. The USP domain maps to 458 to 830; the sequence is DVPAMYGNVE…LPSVLTFQTK (373 aa). Residues 880–1052 form the Exonuclease domain; it reads VAIDAEFIRL…IEDATTALKL (173 aa). Asp883, Glu885, Asp992, and Asp1045 together coordinate a divalent metal cation. The interval 1083–1129 is disordered; sequence APGSGNRNSMPAGMTATGAGRDTPEPMTTPKKGGAFGGVGFRSPMRR.

It belongs to the peptidase C19 family. PAN2 subfamily. Forms a heterotrimer with an asymmetric homodimer of the regulatory subunit PAN3 to form the poly(A)-nuclease (PAN) deadenylation complex. The cofactor is a divalent metal cation.

The protein localises to the cytoplasm. The enzyme catalyses Exonucleolytic cleavage of poly(A) to 5'-AMP.. Positively regulated by the regulatory subunit PAN3. Catalytic subunit of the poly(A)-nuclease (PAN) deadenylation complex, one of two cytoplasmic mRNA deadenylases involved in mRNA turnover. PAN specifically shortens poly(A) tails of RNA and the activity is stimulated by poly(A)-binding protein PAB1. PAN deadenylation is followed by rapid degradation of the shortened mRNA tails by the CCR4-NOT complex. Deadenylated mRNAs are then degraded by two alternative mechanisms, namely exosome-mediated 3'-5' exonucleolytic degradation, or deadenylation-dependent mRNA decaping and subsequent 5'-3' exonucleolytic degradation by XRN1. May also be involved in post-transcriptional maturation of mRNA poly(A) tails. The protein is PAN2-PAN3 deadenylation complex catalytic subunit PAN2 of Phaeosphaeria nodorum (strain SN15 / ATCC MYA-4574 / FGSC 10173) (Glume blotch fungus).